Consider the following 189-residue polypeptide: MIFLYKIFGKWDPTEVEVKDLGIKRYVSLTPVIVPHSSGKHARQQFNKSEISIVERLANNLMRTETNTGKKQVTLRAVEEAFDIVNKKTKQNPIQVLVDAIANAGPREEVVRLKYGGISVPKAVDTAPQRRVDTALRYISMGTNAAAFKSKRSVAECLATELIGAANRDTKSFSINRKDAKERVAKAAR.

It belongs to the universal ribosomal protein uS7 family. In terms of assembly, part of the 30S ribosomal subunit.

One of the primary rRNA binding proteins, it binds directly to 16S rRNA where it nucleates assembly of the head domain of the 30S subunit. Is located at the subunit interface close to the decoding center. This chain is Small ribosomal subunit protein uS7, found in Methanosarcina acetivorans (strain ATCC 35395 / DSM 2834 / JCM 12185 / C2A).